Reading from the N-terminus, the 651-residue chain is Acetyl-coenzyme A synthetase (651 aa).

CoA-binding positions include 189–192 (RGGK), threonine 311, and asparagine 335. Residues 387-389 (GEP), 411-416 (DTWWQT), aspartate 500, and arginine 515 each bind ATP. Serine 523 is a binding site for CoA. ATP is bound at residue arginine 526. Positions 537, 539, and 542 each coordinate Mg(2+). Arginine 586 contacts CoA. Residue lysine 611 is modified to N6-acetyllysine.

Belongs to the ATP-dependent AMP-binding enzyme family. Mg(2+) serves as cofactor. Acetylated. Deacetylation by the SIR2-homolog deacetylase activates the enzyme.

It carries out the reaction acetate + ATP + CoA = acetyl-CoA + AMP + diphosphate. Catalyzes the conversion of acetate into acetyl-CoA (AcCoA), an essential intermediate at the junction of anabolic and catabolic pathways. AcsA undergoes a two-step reaction. In the first half reaction, AcsA combines acetate with ATP to form acetyl-adenylate (AcAMP) intermediate. In the second half reaction, it can then transfer the acetyl group from AcAMP to the sulfhydryl group of CoA, forming the product AcCoA. This is Acetyl-coenzyme A synthetase from Brucella abortus (strain S19).